Reading from the N-terminus, the 190-residue chain is Protein GrpE (190 aa).

Over residues 1–31 (MTETPNTSSEEIQTSEPSSDNELQTLQQENA) the composition is skewed to polar residues. The segment at 1–34 (MTETPNTSSEEIQTSEPSSDNELQTLQQENANLK) is disordered.

The protein belongs to the GrpE family. In terms of assembly, homodimer.

It is found in the cytoplasm. Functionally, participates actively in the response to hyperosmotic and heat shock by preventing the aggregation of stress-denatured proteins, in association with DnaK and GrpE. It is the nucleotide exchange factor for DnaK and may function as a thermosensor. Unfolded proteins bind initially to DnaJ; upon interaction with the DnaJ-bound protein, DnaK hydrolyzes its bound ATP, resulting in the formation of a stable complex. GrpE releases ADP from DnaK; ATP binding to DnaK triggers the release of the substrate protein, thus completing the reaction cycle. Several rounds of ATP-dependent interactions between DnaJ, DnaK and GrpE are required for fully efficient folding. The polypeptide is Protein GrpE (Chlamydia muridarum (strain MoPn / Nigg)).